The sequence spans 258 residues: Leucyl/phenylalanyl-tRNA--protein transferase (258 aa).

The disordered stretch occupies residues 199-220 (GGSDGPAPDQSIGMSSSGGVSD). Residues 209–220 (SIGMSSSGGVSD) are compositionally biased toward low complexity.

The protein belongs to the L/F-transferase family.

It localises to the cytoplasm. The enzyme catalyses N-terminal L-lysyl-[protein] + L-leucyl-tRNA(Leu) = N-terminal L-leucyl-L-lysyl-[protein] + tRNA(Leu) + H(+). The catalysed reaction is N-terminal L-arginyl-[protein] + L-leucyl-tRNA(Leu) = N-terminal L-leucyl-L-arginyl-[protein] + tRNA(Leu) + H(+). It catalyses the reaction L-phenylalanyl-tRNA(Phe) + an N-terminal L-alpha-aminoacyl-[protein] = an N-terminal L-phenylalanyl-L-alpha-aminoacyl-[protein] + tRNA(Phe). Functions in the N-end rule pathway of protein degradation where it conjugates Leu, Phe and, less efficiently, Met from aminoacyl-tRNAs to the N-termini of proteins containing an N-terminal arginine or lysine. The protein is Leucyl/phenylalanyl-tRNA--protein transferase of Hyphomonas neptunium (strain ATCC 15444).